A 305-amino-acid chain; its full sequence is tRNA-cytidine(32) 2-sulfurtransferase (305 aa).

Residues 1 to 20 (MTAVLPLPHPLADPAPRDPR) are disordered. Residues 59 to 64 (SGGKDS) carry the PP-loop motif motif. [4Fe-4S] cluster contacts are provided by C134, C137, and C225. A compositionally biased stretch (low complexity) spans 282–293 (DAPPDLAPDPGA). The tract at residues 282–305 (DAPPDLAPDPGAWLTASDATHDSD) is disordered.

This sequence belongs to the TtcA family. Homodimer. Requires Mg(2+) as cofactor. [4Fe-4S] cluster serves as cofactor.

It is found in the cytoplasm. The enzyme catalyses cytidine(32) in tRNA + S-sulfanyl-L-cysteinyl-[cysteine desulfurase] + AH2 + ATP = 2-thiocytidine(32) in tRNA + L-cysteinyl-[cysteine desulfurase] + A + AMP + diphosphate + H(+). It functions in the pathway tRNA modification. Functionally, catalyzes the ATP-dependent 2-thiolation of cytidine in position 32 of tRNA, to form 2-thiocytidine (s(2)C32). The sulfur atoms are provided by the cysteine/cysteine desulfurase (IscS) system. The sequence is that of tRNA-cytidine(32) 2-sulfurtransferase from Xanthomonas oryzae pv. oryzae (strain MAFF 311018).